A 422-amino-acid chain; its full sequence is Transcription termination factor Rho (422 aa).

A Rho RNA-BD domain is found at 52 to 127 (EVGGDGVLEV…TRVTKINFDD (76 aa)). Residues 173–178 (GKGQRG), 185–190 (RTGKTV), and Arg-216 each bind ATP.

Belongs to the Rho family. In terms of assembly, homohexamer. The homohexamer assembles into an open ring structure.

Facilitates transcription termination by a mechanism that involves Rho binding to the nascent RNA, activation of Rho's RNA-dependent ATPase activity, and release of the mRNA from the DNA template. The polypeptide is Transcription termination factor Rho (Cereibacter sphaeroides (strain ATCC 17023 / DSM 158 / JCM 6121 / CCUG 31486 / LMG 2827 / NBRC 12203 / NCIMB 8253 / ATH 2.4.1.) (Rhodobacter sphaeroides)).